A 110-amino-acid chain; its full sequence is Phosphoribosyl-ATP pyrophosphatase (110 aa).

The protein belongs to the PRA-PH family.

It is found in the cytoplasm. It carries out the reaction 1-(5-phospho-beta-D-ribosyl)-ATP + H2O = 1-(5-phospho-beta-D-ribosyl)-5'-AMP + diphosphate + H(+). It functions in the pathway amino-acid biosynthesis; L-histidine biosynthesis; L-histidine from 5-phospho-alpha-D-ribose 1-diphosphate: step 2/9. This chain is Phosphoribosyl-ATP pyrophosphatase, found in Stutzerimonas stutzeri (strain A1501) (Pseudomonas stutzeri).